The chain runs to 153 residues: ATP synthase subunit b' (153 aa).

The helical transmembrane segment at 20–40 (TLPLMAVQVVLLTFILNALFF) threads the bilayer.

It belongs to the ATPase B chain family. F-type ATPases have 2 components, F(1) - the catalytic core - and F(0) - the membrane proton channel. F(1) has five subunits: alpha(3), beta(3), gamma(1), delta(1), epsilon(1). F(0) has four main subunits: a(1), b(1), b'(1) and c(10-14). The alpha and beta chains form an alternating ring which encloses part of the gamma chain. F(1) is attached to F(0) by a central stalk formed by the gamma and epsilon chains, while a peripheral stalk is formed by the delta, b and b' chains.

It localises to the cellular thylakoid membrane. In terms of biological role, f(1)F(0) ATP synthase produces ATP from ADP in the presence of a proton or sodium gradient. F-type ATPases consist of two structural domains, F(1) containing the extramembraneous catalytic core and F(0) containing the membrane proton channel, linked together by a central stalk and a peripheral stalk. During catalysis, ATP synthesis in the catalytic domain of F(1) is coupled via a rotary mechanism of the central stalk subunits to proton translocation. Functionally, component of the F(0) channel, it forms part of the peripheral stalk, linking F(1) to F(0). The b'-subunit is a diverged and duplicated form of b found in plants and photosynthetic bacteria. This Prochlorococcus marinus (strain MIT 9211) protein is ATP synthase subunit b'.